The following is a 552-amino-acid chain: Putative transport protein APL_0966 (552 aa).

5 helical membrane passes run 4-24 (IAII…IGHI), 29-49 (VGLG…CTHL), 65-85 (FGLI…FFAS), 95-115 (GFAV…HKLF), and 161-181 (IAYP…RIIF). 2 consecutive RCK C-terminal domains span residues 190 to 275 (QEFD…ILGE) and 277 to 360 (ADVS…IIGD). 6 helical membrane-spanning segments follow: residues 370-390 (MLPI…PLYI), 402-424 (AGGP…LYWF), 438-458 (IVLF…DTLL), 463-483 (LAWM…TGFV), 492-512 (YLSL…LAFA), and 529-549 (VYPL…ILLW).

The protein belongs to the AAE transporter (TC 2.A.81) family. YidE subfamily.

The protein resides in the cell membrane. In Actinobacillus pleuropneumoniae serotype 5b (strain L20), this protein is Putative transport protein APL_0966.